The sequence spans 401 residues: Enoyl-[acyl-carrier-protein] reductase [NADH] (401 aa).

NAD(+) is bound by residues 48–53, 74–75, 111–112, and 140–141; these read GASSGY, FE, DA, and LA. Substrate is bound at residue Tyr226. Residue Tyr236 is the Proton donor of the active site. NAD(+)-binding positions include Lys245 and 274-276; that span reads VVT.

Belongs to the TER reductase family. In terms of assembly, monomer.

The catalysed reaction is a 2,3-saturated acyl-[ACP] + NAD(+) = a (2E)-enoyl-[ACP] + NADH + H(+). It functions in the pathway lipid metabolism; fatty acid biosynthesis. In terms of biological role, involved in the final reduction of the elongation cycle of fatty acid synthesis (FAS II). Catalyzes the reduction of a carbon-carbon double bond in an enoyl moiety that is covalently linked to an acyl carrier protein (ACP). The polypeptide is Enoyl-[acyl-carrier-protein] reductase [NADH] (Xylella fastidiosa (strain 9a5c)).